Here is a 220-residue protein sequence, read N- to C-terminus: MKSVIYHALSQKEANDSDVQPSGAQRAEAFVRAFLKRSTPRMSPQAREDQLQRKAVVLEYFTRHKRKEKKKKAKGLSARQRRELRLFDIKPEQQRYSLFLPLHELWKQYIRDLCNGLKPDTQPQMIQAKLLKADLHGAIISVTKSKCPSYVGITGILLQETKHIFKIITKEDRLKVIPKLNCVFTVEIDGFISYIYGSKFQLRSSERSAKKFKAKGTIDL.

The residue at position 10 (Ser10) is a Phosphoserine.

This sequence belongs to the eukaryotic/archaeal RNase P protein component 1 family. Component of nuclear RNase P and RNase MRP ribonucleoproteins. RNase P consists of a catalytic RNA moiety and 10 different protein chains; POP1, POP4, POP5, POP7, RPP14, RPP21, RPP25, RPP30, RPP38 and RPP40. Within the RNase P complex, POP1, POP7 and RPP25 form the 'finger' subcomplex, POP5, RPP14, RPP40 and homodimeric RPP30 form the 'palm' subcomplex, and RPP21, POP4 and RPP38 form the 'wrist' subcomplex. All subunits of the RNase P complex interact with the catalytic RNA. Several subunits of RNase P are also part of the RNase MRP complex. RNase MRP consists of a catalytic RNA moiety and about 8 protein subunits; POP1, POP7, RPP25, RPP30, RPP38, RPP40 and possibly also POP4 and POP5.

It is found in the nucleus. It localises to the nucleolus. Functionally, component of ribonuclease P, a ribonucleoprotein complex that generates mature tRNA molecules by cleaving their 5'-ends. This is Ribonuclease P protein subunit p29 (POP4) from Pongo abelii (Sumatran orangutan).